A 1113-amino-acid chain; its full sequence is StAR-related lipid transfer protein 13 (1113 aa).

At methionine 1 the chain carries N-acetylmethionine. An SAM domain is found at 55-122; sequence QQEIEAKEAC…LNKCASMRLD (68 aa). Disordered stretches follow at residues 164-218, 230-256, and 308-343; these read PVAD…HSAD, SSLP…RTRA, and NGDL…STVS. Residues 179–188 are compositionally biased toward polar residues; sequence NTASSESVLT. Positions 197-214 are enriched in low complexity; sequence SIHSESSGGSDSRSQSGH. Positions 230-245 are enriched in polar residues; that stretch reads SSLPQSTREGLNQSFH. Low complexity predominate over residues 322-340; it reads GLPCSSKSSGESSPLENSS. At serine 411 the chain carries Phosphoserine. Polar residues-rich tracts occupy residues 421–435 and 529–549; these read SNGV…SLGR and PNQV…TTPS. Disordered regions lie at residues 421–443 and 514–578; these read SNGV…GMRE and HSTL…GASL. The 206-residue stretch at 663 to 868 folds into the Rho-GAP domain; the sequence is VPLIVHVQRT…HMITECNRLF (206 aa). An START domain is found at 899–1109; the sequence is LAESGATFHT…SFQPLVAEGP (211 aa).

As to quaternary structure, homodimer. Interacts with TAX1BP1.

It is found in the cytoplasm. The protein localises to the membrane. It localises to the mitochondrion membrane. The protein resides in the lipid droplet. Its function is as follows. May function as a GTPase-activating protein. In Mus musculus (Mouse), this protein is StAR-related lipid transfer protein 13 (Stard13).